The primary structure comprises 336 residues: MNLNKMLSNQFDSVVLNVKKTSELVDCSGASVFIIHNNNIVTEEYWGRHSQANNARSIQEDTQFHVASVRKSYIGYAVAYAVQQGLISTDDPITKYLSINSPILQKTTIRHLLTHTHGLKMVNGKLQQEFTSGESWAYRGIGIELLTQIVKITTGQSVAEIVDQVFKSLEFKETGWYGELNEKLVEVIRKPGDPNWYTSKSTDGDKMNMYVSTRELAKWGYFHLKEGLINGKQIVPSEIFKLVTSIQSPNTINEEHPTNGFLWFVQDLPTRRSEIGEYLPKGSFQILGYTGVTLLIVPQHNLVAVRAFNSFGSPEGFNYLADVRKFGDTIMTCLLS.

This is an uncharacterized protein from Alkalihalophilus pseudofirmus (strain ATCC BAA-2126 / JCM 17055 / OF4) (Bacillus pseudofirmus).